A 197-amino-acid chain; its full sequence is Pyridoxal 5'-phosphate synthase subunit PdxT (197 aa).

L-glutamine is bound at residue 52–54; it reads GES. Catalysis depends on Cys84, which acts as the Nucleophile. L-glutamine-binding positions include Arg111 and 139-140; that span reads IR. Catalysis depends on charge relay system residues His175 and Glu177.

The protein belongs to the glutaminase PdxT/SNO family. In the presence of PdxS, forms a dodecamer of heterodimers. Only shows activity in the heterodimer.

It carries out the reaction aldehydo-D-ribose 5-phosphate + D-glyceraldehyde 3-phosphate + L-glutamine = pyridoxal 5'-phosphate + L-glutamate + phosphate + 3 H2O + H(+). The catalysed reaction is L-glutamine + H2O = L-glutamate + NH4(+). The protein operates within cofactor biosynthesis; pyridoxal 5'-phosphate biosynthesis. Functionally, catalyzes the hydrolysis of glutamine to glutamate and ammonia as part of the biosynthesis of pyridoxal 5'-phosphate. The resulting ammonia molecule is channeled to the active site of PdxS. The chain is Pyridoxal 5'-phosphate synthase subunit PdxT from Halorubrum lacusprofundi (strain ATCC 49239 / DSM 5036 / JCM 8891 / ACAM 34).